We begin with the raw amino-acid sequence, 424 residues long: UDP-N-acetylglucosamine 1-carboxyvinyltransferase (424 aa).

Position 22-23 (22-23 (KN)) interacts with phosphoenolpyruvate. UDP-N-acetyl-alpha-D-glucosamine is bound at residue Arg98. Cys122 acts as the Proton donor in catalysis. At Cys122 the chain carries 2-(S-cysteinyl)pyruvic acid O-phosphothioketal. UDP-N-acetyl-alpha-D-glucosamine contacts are provided by residues 127–131 (RPVDQ), Asp312, and Ile334.

Belongs to the EPSP synthase family. MurA subfamily.

Its subcellular location is the cytoplasm. It carries out the reaction phosphoenolpyruvate + UDP-N-acetyl-alpha-D-glucosamine = UDP-N-acetyl-3-O-(1-carboxyvinyl)-alpha-D-glucosamine + phosphate. It functions in the pathway cell wall biogenesis; peptidoglycan biosynthesis. In terms of biological role, cell wall formation. Adds enolpyruvyl to UDP-N-acetylglucosamine. The chain is UDP-N-acetylglucosamine 1-carboxyvinyltransferase from Xanthomonas campestris pv. campestris (strain 8004).